We begin with the raw amino-acid sequence, 497 residues long: L-arabinose isomerase (497 aa).

Residues E306, E333, H349, and H448 each coordinate Mn(2+).

The protein belongs to the arabinose isomerase family. Requires Mn(2+) as cofactor.

The enzyme catalyses beta-L-arabinopyranose = L-ribulose. It functions in the pathway carbohydrate degradation; L-arabinose degradation via L-ribulose; D-xylulose 5-phosphate from L-arabinose (bacterial route): step 1/3. Functionally, catalyzes the conversion of L-arabinose to L-ribulose. The sequence is that of L-arabinose isomerase from Vibrio parahaemolyticus serotype O3:K6 (strain RIMD 2210633).